Reading from the N-terminus, the 187-residue chain is Intermembrane transport lipoprotein PqiC (187 aa).

A signal peptide spans 1–15 (MKKWLVTIAALWLAG). The N-palmitoyl cysteine moiety is linked to residue cysteine 16. Cysteine 16 carries the S-diacylglycerol cysteine lipid modification.

In terms of assembly, may form a complex composed of PqiA, PqiB and PqiC. Interacts with PqiB.

Its subcellular location is the cell outer membrane. In terms of biological role, component of a transport pathway that contributes to membrane integrity. The protein is Intermembrane transport lipoprotein PqiC of Escherichia coli (strain K12).